The primary structure comprises 1051 residues: Putative helicase/primase complex protein (1051 aa).

Belongs to the asfivirus F1055L family.

Its function is as follows. May be involved in DNA replication. The protein is Putative helicase/primase complex protein of Ornithodoros (relapsing fever ticks).